Consider the following 300-residue polypeptide: Epimerase family protein SAV0769 (300 aa).

Belongs to the NAD(P)-dependent epimerase/dehydratase family. SDR39U1 subfamily.

The protein is Epimerase family protein SAV0769 of Staphylococcus aureus (strain Mu50 / ATCC 700699).